The sequence spans 1336 residues: Aldehyde oxidase 4 (1336 aa).

One can recognise a 2Fe-2S ferredoxin-type domain in the interval 8 to 95; sequence DELIFFVNGK…GAAITTVEGV (88 aa). Residues Cys47, Cys52, Cys55, and Cys77 each contribute to the [2Fe-2S] cluster site. Gln116 provides a ligand contact to Mo-molybdopterin. 4 residues coordinate [2Fe-2S] cluster: Cys117, Cys120, Cys152, and Cys154. Position 154 (Cys154) interacts with Mo-molybdopterin. Residues 237-423 form the FAD-binding PCMH-type domain; the sequence is FQGKRTTWII…LSIFIPYTAQ (187 aa). FAD is bound by residues 265-272, Ala346, Thr355, His359, Asp368, and Ile413; that span reads LVMGNTTV. Residues 804-805, Leu1045, 1086-1089, Gln1201, and Leu1265 each bind Mo-molybdopterin; these read AF and GSMG. The active-site Proton acceptor; for azaheterocycle hydroxylase activity is Glu1267.

Belongs to the xanthine dehydrogenase family. Homodimer. The cofactor is [2Fe-2S] cluster. It depends on FAD as a cofactor. Mo-molybdopterin serves as cofactor. In terms of tissue distribution, highly expressed in Harderian glands and sebaceous glands with detectable levels in the epidermis and other keratinized epithelia (at protein level). Detected in testis. The expression is 3 times greater in females than in males.

It is found in the cytoplasm. It catalyses the reaction an aldehyde + O2 + H2O = a carboxylate + H2O2 + H(+). It carries out the reaction retinal + O2 + H2O = retinoate + H2O2 + H(+). The enzyme catalyses all-trans-retinal + O2 + H2O = all-trans-retinoate + H2O2 + H(+). In terms of biological role, aldehyde oxidase able to catalyze the oxidation of retinaldehyde into retinoate. Is responsible for the major all-trans-retinaldehyde-metabolizing activity in the Harderian gland, and contributes a significant amount of the same activity in the skin. Is devoid of pyridoxal-oxidizing activity, in contrast to the other aldehyde oxidases. Acts as a negative modulator of the epidermal trophism. May be able to oxidize a wide variety of aldehydes into their corresponding carboxylates and to hydroxylate azaheterocycles. The chain is Aldehyde oxidase 4 (Aox4) from Mus musculus (Mouse).